We begin with the raw amino-acid sequence, 580 residues long: Cytochrome P450 monooxygenase helB1 (580 aa).

A disordered region spans residues 1-32 (MRTYAIRPVSNRLPGPIEPKKHRRDRDNSTTG). N-linked (GlcNAc...) asparagine glycosylation is present at asparagine 28. A helical transmembrane segment spans residues 61-81 (FLNTISVLQVLAAIFIGALTY). Position 497 (cysteine 497) interacts with heme.

This sequence belongs to the cytochrome P450 family. Requires heme as cofactor.

It localises to the membrane. It participates in mycotoxin biosynthesis. Cytochrome P450 monooxygenase; part of the gene cluster that mediates the biosynthesis of helvolic acid, an antibacterial nortriterpenoid. Protostadienol synthase helA cyclizes (3S)-oxidosqualene to (17Z)-protosta-17(20),24-dien-3-beta-ol (protostadienol). The synthesis of protostadienol is followed by several steps of monooxygenation, dehydrogenation, and acyl transfer to yield the final helvolic acid. Following the cyclization to the tetracyclic protostadienol by helA, cytochrome P450 monooxygenases helB1-mediated and helB2-mediated oxidation at C-4 and C-16, acyltransferase helD2-dependent acetylation of 16-OH, oxidation of C-21 by cytochrome P450 monooxygenase helB4, and short chain dehydrogenase helC-dependent oxidative decarboxylation yield the fusidane skeleton. This intermediate is further modified in three additional steps mediated by the cytochrome P450 monooxygenase helB3, the acyltransferase helD1, and the 3-ketosteroid 1-dehydrogenase helE to give helvolic acid. Compared with the late stages in the biosynthesis of helvolic acid, enzymes involved in the early stage modifications act in a relatively strict order. The hydroxylation of C-16 by helB1 and subsequent acetylation by helD2 should occur before the helB3-mediated oxidation of C-21. C-4 demethylation in fusidane-type antibiotics proceeds in an unusual manner though it is also achieved by oxidative decarboxylation. The methyl group at C-4 beta position is oxidized by helB1 and subsequently removed by the short chain dehydrogenase helC. This chain is Cytochrome P450 monooxygenase helB1, found in Aspergillus fumigatus (strain ATCC MYA-4609 / CBS 101355 / FGSC A1100 / Af293) (Neosartorya fumigata).